Consider the following 238-residue polypeptide: Purine nucleoside phosphorylase DeoD-type (238 aa).

Residue histidine 4 participates in a purine D-ribonucleoside binding. Residues glycine 20, arginine 24, arginine 43, and 87-90 (RVGS) contribute to the phosphate site. Residues 179-181 (EME) and 203-204 (SD) each bind a purine D-ribonucleoside. Aspartate 204 (proton donor) is an active-site residue.

This sequence belongs to the PNP/UDP phosphorylase family. Homohexamer; trimer of homodimers.

It catalyses the reaction a purine D-ribonucleoside + phosphate = a purine nucleobase + alpha-D-ribose 1-phosphate. It carries out the reaction a purine 2'-deoxy-D-ribonucleoside + phosphate = a purine nucleobase + 2-deoxy-alpha-D-ribose 1-phosphate. Its function is as follows. Catalyzes the reversible phosphorolytic breakdown of the N-glycosidic bond in the beta-(deoxy)ribonucleoside molecules, with the formation of the corresponding free purine bases and pentose-1-phosphate. The chain is Purine nucleoside phosphorylase DeoD-type from Histophilus somni (strain 129Pt) (Haemophilus somnus).